Consider the following 89-residue polypeptide: Small ribosomal subunit protein uS15 (89 aa).

It belongs to the universal ribosomal protein uS15 family. As to quaternary structure, part of the 30S ribosomal subunit. Forms a bridge to the 50S subunit in the 70S ribosome, contacting the 23S rRNA.

In terms of biological role, one of the primary rRNA binding proteins, it binds directly to 16S rRNA where it helps nucleate assembly of the platform of the 30S subunit by binding and bridging several RNA helices of the 16S rRNA. Its function is as follows. Forms an intersubunit bridge (bridge B4) with the 23S rRNA of the 50S subunit in the ribosome. The chain is Small ribosomal subunit protein uS15 from Allorhizobium ampelinum (strain ATCC BAA-846 / DSM 112012 / S4) (Agrobacterium vitis (strain S4)).